A 53-amino-acid chain; its full sequence is ComX pheromone (53 aa).

A propeptide spanning residues 1–46 is cleaved from the precursor; the sequence is MQEMVGYLIKYPNVLREVMEGNACLLGVDKDQSECIINGFKGLEIY. Trp51 is lipidated: 3'-geranyl-2',N2-cyclotryptophan.

Interacts directly with the sensor histidine kinase ComP and stimulates its activity. In terms of processing, trp-51 is modified by geranylation, which is essential for activity. Modified by the tryptophan prenyltransferase ComQ before export to the extracellular environment. The type of isoprenyl derivative differs among the different pherotypes and depends on ComX primary sequence.

It localises to the secreted. In terms of biological role, part of a major quorum-sensing system that regulates the development of genetic competence. Acts through the activation of the two-component regulatory system ComP/ComA composed of a sensor histidine kinase, ComP, and a response regulator, ComA. This Bacillus mojavensis protein is ComX pheromone.